Reading from the N-terminus, the 419-residue chain is eIF5-mimic protein 2-A (419 aa).

A compositionally biased stretch (polar residues) spans 1 to 15 (MNNQKQQKPTLTGQR). The disordered stretch occupies residues 1-29 (MNNQKQQKPTLTGQRFKTRKRDEKERFDP). The 168-residue stretch at 247 to 414 (NQQSIGARKE…KNAEEESESE (168 aa)) folds into the W2 domain.

Belongs to the BZW family.

Translation initiation regulator which may repress repeat-associated non-AUG (RAN) initiated translation probably by acting as a competitive inhibitor of eukaryotic translation initiation factor 5 (EIF5) function. Enhances histone H4 gene transcription but does not seem to bind DNA directly. This Danio rerio (Zebrafish) protein is eIF5-mimic protein 2-A (bzw1a).